Consider the following 367-residue polypeptide: Anhydro-N-acetylmuramic acid kinase (367 aa).

10–17 is an ATP binding site; sequence GTSLDGVD.

Belongs to the anhydro-N-acetylmuramic acid kinase family.

The enzyme catalyses 1,6-anhydro-N-acetyl-beta-muramate + ATP + H2O = N-acetyl-D-muramate 6-phosphate + ADP + H(+). It functions in the pathway amino-sugar metabolism; 1,6-anhydro-N-acetylmuramate degradation. It participates in cell wall biogenesis; peptidoglycan recycling. Its function is as follows. Catalyzes the specific phosphorylation of 1,6-anhydro-N-acetylmuramic acid (anhMurNAc) with the simultaneous cleavage of the 1,6-anhydro ring, generating MurNAc-6-P. Is required for the utilization of anhMurNAc either imported from the medium or derived from its own cell wall murein, and thus plays a role in cell wall recycling. This is Anhydro-N-acetylmuramic acid kinase from Aliivibrio fischeri (strain ATCC 700601 / ES114) (Vibrio fischeri).